A 704-amino-acid polypeptide reads, in one-letter code: Elongation factor G (704 aa).

Residues 8 to 290 (EKYRNIGICA…GVVRYLPAPN (283 aa)) form the tr-type G domain. Residues 17-24 (AHVDAGKT), 88-92 (DTPGH), and 142-145 (NKMD) contribute to the GTP site.

Belongs to the TRAFAC class translation factor GTPase superfamily. Classic translation factor GTPase family. EF-G/EF-2 subfamily.

It is found in the cytoplasm. Functionally, catalyzes the GTP-dependent ribosomal translocation step during translation elongation. During this step, the ribosome changes from the pre-translocational (PRE) to the post-translocational (POST) state as the newly formed A-site-bound peptidyl-tRNA and P-site-bound deacylated tRNA move to the P and E sites, respectively. Catalyzes the coordinated movement of the two tRNA molecules, the mRNA and conformational changes in the ribosome. The sequence is that of Elongation factor G from Francisella tularensis subsp. holarctica (strain LVS).